The chain runs to 1622 residues: Ferredoxin-dependent glutamate synthase 1, chloroplastic/mitochondrial (1622 aa).

The transit peptide at 1–105 (MAMQSLSPVP…LEDILSERGA (105 aa)) directs the protein to the chloroplast and mitochondrion. The active-site For GATase activity is C106. In terms of domain architecture, Glutamine amidotransferase type-2 spans 106 to 505 (CGVGFIANLD…PGMMIAVDLV (400 aa)). 1184–1241 (LTETHQTLIANGLRERVILRVDGGLKSGVDVLMAAAMGADEYGFGSLAMIATGCVMAR) lines the FMN pocket. 3 residues coordinate [3Fe-4S] cluster: C1237, C1243, and C1248.

It belongs to the glutamate synthase family. In terms of assembly, interacts with SHM1. [3Fe-4S] cluster serves as cofactor. FAD is required as a cofactor. The cofactor is FMN. Highly expressed in leaves. High expression in the leaf mesophyll and phloem companion cell-sieve element complex.

It is found in the plastid. It localises to the chloroplast stroma. The protein localises to the mitochondrion matrix. It carries out the reaction 2 oxidized [2Fe-2S]-[ferredoxin] + 2 L-glutamate = L-glutamine + 2 reduced [2Fe-2S]-[ferredoxin] + 2-oxoglutarate + 2 H(+). It participates in amino-acid biosynthesis; L-glutamate biosynthesis via GLT pathway; L-glutamate from 2-oxoglutarate and L-glutamine (ferredoxin route): step 1/1. The protein operates within energy metabolism; nitrogen metabolism. Its function is as follows. Involved in glutamate biosynthesis in leaf. Required for the reassimilation of ammonium ions generated during photorespiration. The sequence is that of Ferredoxin-dependent glutamate synthase 1, chloroplastic/mitochondrial from Arabidopsis thaliana (Mouse-ear cress).